Reading from the N-terminus, the 446-residue chain is C-type lectin domain family 18 member A (446 aa).

Residues 1–26 form the signal peptide; sequence MLHPETSPGRGHLLAVLLALLGTAWA. The 131-residue stretch at 52-182 folds into the SCP domain; sequence LSLHNRLRSW…AAIEAFVCAY (131 aa). N-linked (GlcNAc...) asparagine glycosylation occurs at asparagine 144. The region spanning 228–261 is the EGF-like domain; sequence PRNPCRMSCQNHGRLNISTCHCHCPPGYTGRYCQ. Cystine bridges form between cysteine 236–cysteine 249, cysteine 251–cysteine 260, cysteine 327–cysteine 432, and cysteine 408–cysteine 424. Positions 306–433 constitute a C-type lectin domain; sequence IDGDCFMVSS…CKTRNRYICQ (128 aa).

In terms of processing, N-glycosylated. As to expression, dectected in all cell lines tested and in peripheral blood cells.

It localises to the secreted. The protein localises to the endoplasmic reticulum. The protein resides in the golgi apparatus. It is found in the endosome. In terms of biological role, binds polysaccharides in a Ca(2+)-independent manner with a preferentially binding to fucoidan, beta-glucans and galactans. The sequence is that of C-type lectin domain family 18 member A (CLEC18A) from Homo sapiens (Human).